A 172-amino-acid chain; its full sequence is Putative phosphoesterase BCAH820_1309 (172 aa).

The active-site Proton donor is the H34. 2 consecutive short sequence motifs (HXTX) follow at residues 34–37 (HITL) and 115–118 (HLTI). Residue H115 is the Proton acceptor of the active site.

It belongs to the 2H phosphoesterase superfamily. YjcG family.

This is Putative phosphoesterase BCAH820_1309 from Bacillus cereus (strain AH820).